A 2223-amino-acid polypeptide reads, in one-letter code: Sperm-associated antigen 17 (2223 aa).

2 stretches are compositionally biased toward basic and acidic residues: residues 144–172 and 200–212; these read RENE…EKKA and RRGE…RYID. The disordered stretch occupies residues 144-214; sequence RENEKKVIED…DHTNRYIDDE (71 aa). The stretch at 266 to 295 forms a coiled coil; sequence NQQQEVLLQSEDLEAEKLKKENAIKELKTF. 6 disordered regions span residues 387–416, 680–710, 731–762, 950–1015, 1179–1212, and 1345–1378; these read MPTS…PPPV, MSVQ…LNNL, PQHE…PKKM, EERL…EPKI, GKIK…PEPV, and ETIP…PPPE. 3 stretches are compositionally biased toward basic and acidic residues: residues 743–756, 950–999, and 1182–1205; these read EIKD…DSHE, EERL…EQVK, and KGKE…KKEE. Residues 940-966 are a coiled coil; sequence WKEEQHRLAEEERLREEKKAEKKGKEA. Over residues 1345–1354 the composition is skewed to polar residues; the sequence is ETIPSEITNT. Residues 1874 to 1907 adopt a coiled-coil conformation; it reads RHTASSKRWKEKIDKTRKEIETTQNYLMDIKNRI. Disordered stretches follow at residues 1938 to 1957 and 1962 to 2008; these read TKKN…DLNL and HKVS…SYEP. Residues 1988–1998 are compositionally biased toward polar residues; it reads TAQNQTENLTK.

As to quaternary structure, interacts (via the C-terminus) with SPAG6; the interaction probably occurs on polymerized microtubules. Highly expressed in testis. Expressed in organs that contain cilia-bearing cells including brain, oviduct, lung, and uterus.

The protein localises to the cytoplasm. It is found in the cytoskeleton. Its subcellular location is the flagellum axoneme. The protein resides in the cytoplasmic vesicle. It localises to the secretory vesicle. The protein localises to the acrosome. It is found in the golgi apparatus. Its function is as follows. Component of the central pair apparatus of ciliary axonemes. Plays a critical role in the function and structure of motile cilia. May play a role in endochondral bone formation, most likely because of a function in primary cilia of chondrocytes and osteoblasts. Essential for normal spermatogenesis and male fertility. Required for normal manchette structure, transport of proteins along the manchette microtubules and formation of the sperm head and flagellum. Essential for sperm flagellum development and proper assembly of the respiratory motile cilia central pair apparatus, but not the brain ependymal cilia. This Homo sapiens (Human) protein is Sperm-associated antigen 17 (SPAG17).